Here is a 135-residue protein sequence, read N- to C-terminus: MKFLTTNFLKCSVKACDTSNDNFPLQYDGSKCQLVQDESIEFNPEFLLNIVDRVDWPAVLTVAAELGNNALPPTKPSFPSSIQELTDDDMAILNDLHTLLLQTSIAEGEMKCRNCGHIYYIKNGIPNLLLPPHLV.

The region spanning 2 to 131 (KFLTTNFLKC…KNGIPNLLLP (130 aa)) is the TRM112 domain.

It belongs to the TRM112 family. In terms of assembly, heterodimer of MTQ2-TRM112, forming the eRF1 methyltransferase. TRM112 is necessary for the solubility and activity of the catalytic subunit MTQ2. Interacts with TRM11; required for full tRNA methyltransferase activity. Interacts with BUD23; required for full rRNA methyltransferase activity. Interacts with RCM1, NOP2, TRM9 and LYS9.

It is found in the cytoplasm. Its subcellular location is the nucleus. Functionally, acts as an activator of both rRNA/tRNA and protein methyltransferases. Together with methyltransferase MTQ2, required for the methylation of eRF1 on 'Gln-182'. Together with methyltransferase TRM11, required for the formation of 2-methylguanosine at position 10 (m2G10) in tRNA. Together with methyltransferase BUD23, required for the formation of 7-methylguanine at position 1575 (m7G1575) in 18S rRNA. Involved in biogenesis of both 40S and 60S ribosomal subunits. The sequence is that of Multifunctional methyltransferase subunit TRM112 (TRM112) from Saccharomyces cerevisiae (strain ATCC 204508 / S288c) (Baker's yeast).